We begin with the raw amino-acid sequence, 564 residues long: MQTQKARNGSPDVPKKVSPRAARPLKIAALEPESSSSPISATNRTPKDKSPNVLNRRSPRSPVSEKKRPSRITELELLVSQLQEELKKAKDQISVSETSKKQAEQEAEESRKQLQEVSSKLEESQNQFVETSALEEETDKTGSLVFQSVSQECDWEFSATAGERAGLAAVAHEIRQLKLQIEMVASSEAGHVKQAELYNSEVQLLRGNLMDTLFHVENFRNQLKDCEISEAETEALATETLRQLENAKKAVEELKSDGTKAVESYKKMAVELEQSKSRMVWLEALVNKLQNNPADLENHEILLKDYESLRRGESNEMDEEVSSLRCEVERLRAALEASDKKDQEGNVEASSRLRIQAELQSELKIAKSEIDELKARLMDKETELQFISEERDNFSMKLMKNQKEIDVEAELKKLREAIENLKADLMDKETELQIVSDENETLKSDIHKSETDVQDAFLKLGIAMEEADKSSKKAVRVTEQLEATQASNSEMETELRKLKVQSNQWRKAAEAATAMLSAGNNGKFAENYNQTNSPYSEDIDDELTKKKNGNVLKKIGVLWKKPQK.

Disordered stretches follow at residues 1–73 (MQTQ…SRIT) and 88–135 (KAKD…SALE). The span at 33 to 44 (ESSSSPISATNR) shows a compositional bias: polar residues. Basic and acidic residues-rich tracts occupy residues 63–73 (VSEKKRPSRIT) and 98–123 (TSKK…KLEE). Coiled coils occupy residues 70-133 (SRIT…ETSA) and 231-514 (AETE…AATA). Ser533 bears the Phosphoserine mark.

The protein belongs to the ICR family. In terms of assembly, interacts with ARAC11 in vitro. As to expression, expressed in flowers.

In terms of biological role, acts as a scaffold, mediating interaction of ROPs with different proteins. The polypeptide is Interactor of constitutive active ROPs 3 (ICR3) (Arabidopsis thaliana (Mouse-ear cress)).